The primary structure comprises 547 residues: Chaperonin GroEL 1 (547 aa).

ATP is bound by residues 29–32 (TLGP), 86–90 (DGTTT), Gly418, 482–484 (NAA), and Asp498.

Belongs to the chaperonin (HSP60) family. As to quaternary structure, forms a cylinder of 14 subunits composed of two heptameric rings stacked back-to-back. Interacts with the co-chaperonin GroES.

The protein resides in the cytoplasm. It carries out the reaction ATP + H2O + a folded polypeptide = ADP + phosphate + an unfolded polypeptide.. In terms of biological role, together with its co-chaperonin GroES, plays an essential role in assisting protein folding. The GroEL-GroES system forms a nano-cage that allows encapsulation of the non-native substrate proteins and provides a physical environment optimized to promote and accelerate protein folding. The polypeptide is Chaperonin GroEL 1 (Corynebacterium jeikeium (strain K411)).